A 313-amino-acid chain; its full sequence is Probable F-box protein At3g44130 (313 aa).

Positions 1–46 (MASGNLPWELEEEILCRLPLGSLVRLRSVCKHWNDFFNDKWFIKKS) constitute an F-box domain.

In Arabidopsis thaliana (Mouse-ear cress), this protein is Probable F-box protein At3g44130.